A 184-amino-acid polypeptide reads, in one-letter code: Elongation factor P (184 aa).

It belongs to the elongation factor P family.

Its subcellular location is the cytoplasm. It functions in the pathway protein biosynthesis; polypeptide chain elongation. Its function is as follows. Involved in peptide bond synthesis. Stimulates efficient translation and peptide-bond synthesis on native or reconstituted 70S ribosomes in vitro. Probably functions indirectly by altering the affinity of the ribosome for aminoacyl-tRNA, thus increasing their reactivity as acceptors for peptidyl transferase. This is Elongation factor P from Mycoplasma mycoides subsp. mycoides SC (strain CCUG 32753 / NCTC 10114 / PG1).